Here is a 260-residue protein sequence, read N- to C-terminus: Small ribosomal subunit protein bS6 (260 aa).

Belongs to the bacterial ribosomal protein bS6 family.

Binds together with bS18 to 16S ribosomal RNA. The sequence is that of Small ribosomal subunit protein bS6 from Wolbachia sp. subsp. Brugia malayi (strain TRS).